Here is a 529-residue protein sequence, read N- to C-terminus: Na(+)/H(+) antiporter NhaB (529 aa).

12 helical membrane passes run 13 to 33 (FLGK…IINP), 34 to 54 (IVFF…EFIF), 90 to 110 (LVAN…IYFM), 113 to 133 (LLLF…ILSL), 136 to 156 (CFAA…AVVI), 205 to 225 (LLMH…VGEP), 241 to 261 (FLIR…LTCF), 306 to 326 (GLIA…VGLI), 327 to 347 (GLSV…HSLG), 351 to 371 (EEAL…AVII), 451 to 471 (ATPN…APLI), and 479 to 499 (VIMA…GIVF).

The protein belongs to the NhaB Na(+)/H(+) (TC 2.A.34) antiporter family.

The protein resides in the cell inner membrane. It catalyses the reaction 2 Na(+)(in) + 3 H(+)(out) = 2 Na(+)(out) + 3 H(+)(in). Functionally, na(+)/H(+) antiporter that extrudes sodium in exchange for external protons. The protein is Na(+)/H(+) antiporter NhaB of Vibrio vulnificus (strain CMCP6).